The following is an 85-amino-acid chain: UPF0335 protein WP0746 (85 aa).

The protein belongs to the UPF0335 family.

The polypeptide is UPF0335 protein WP0746 (Wolbachia pipientis subsp. Culex pipiens (strain wPip)).